The chain runs to 94 residues: Pyrimidine/purine nucleoside phosphorylase (94 aa).

This sequence belongs to the nucleoside phosphorylase PpnP family.

The catalysed reaction is a purine D-ribonucleoside + phosphate = a purine nucleobase + alpha-D-ribose 1-phosphate. It catalyses the reaction adenosine + phosphate = alpha-D-ribose 1-phosphate + adenine. It carries out the reaction cytidine + phosphate = cytosine + alpha-D-ribose 1-phosphate. The enzyme catalyses guanosine + phosphate = alpha-D-ribose 1-phosphate + guanine. The catalysed reaction is inosine + phosphate = alpha-D-ribose 1-phosphate + hypoxanthine. It catalyses the reaction thymidine + phosphate = 2-deoxy-alpha-D-ribose 1-phosphate + thymine. It carries out the reaction uridine + phosphate = alpha-D-ribose 1-phosphate + uracil. The enzyme catalyses xanthosine + phosphate = alpha-D-ribose 1-phosphate + xanthine. Its function is as follows. Catalyzes the phosphorolysis of diverse nucleosides, yielding D-ribose 1-phosphate and the respective free bases. Can use uridine, adenosine, guanosine, cytidine, thymidine, inosine and xanthosine as substrates. Also catalyzes the reverse reactions. This Psychromonas ingrahamii (strain DSM 17664 / CCUG 51855 / 37) protein is Pyrimidine/purine nucleoside phosphorylase.